A 447-amino-acid polypeptide reads, in one-letter code: RNA-binding protein 208 (447 aa).

2 RRM domains span residues 73–147 (RSVY…WAYA) and 158–236 (FHIF…WATK). The span at 254 to 269 (TNGSSSNPGMEASQDT) shows a compositional bias: polar residues. 2 disordered regions span residues 254-279 (TNGS…ENNP) and 353-372 (WGNK…PPLP). The RRM 3 domain maps to 282–356 (TTVYVGNLGH…KPIKCSWGNK (75 aa)).

In terms of assembly, interacts with RBP-P.

RNA-binding protein. This Oryza sativa subsp. japonica (Rice) protein is RNA-binding protein 208.